A 73-amino-acid polypeptide reads, in one-letter code: Large ribosomal subunit protein bL31 (73 aa).

It belongs to the bacterial ribosomal protein bL31 family. Type A subfamily. As to quaternary structure, part of the 50S ribosomal subunit.

Its function is as follows. Binds the 23S rRNA. The sequence is that of Large ribosomal subunit protein bL31 from Paracoccus denitrificans (strain Pd 1222).